A 214-amino-acid polypeptide reads, in one-letter code: Killer cell lectin-like receptor subfamily B member 1 (214 aa).

The Cytoplasmic segment spans residues 1–42 (MDAPVLYAELNLAETRGLRCTSAPSLPQDACQGPGWHRVALK). Residues 43-63 (LGCAGLIFLLMVLSVLVGFLV) traverse the membrane as a helical; Signal-anchor for type II membrane protein segment. Residues 64-214 (QKPLIEKCSV…WICQKTLKHV (151 aa)) lie on the Extracellular side of the membrane. Residues 98-208 (HCDKCLFTSQ…CSSDNHWICQ (111 aa)) enclose the C-type lectin domain. 2 cysteine pairs are disulfide-bonded: cysteine 119–cysteine 207 and cysteine 186–cysteine 199.

It is found in the membrane. This Mus musculus (Mouse) protein is Killer cell lectin-like receptor subfamily B member 1 (Klrb1).